Here is a 141-residue protein sequence, read N- to C-terminus: Transcription antitermination protein NusB (141 aa).

The protein belongs to the NusB family.

Its function is as follows. Involved in transcription antitermination. Required for transcription of ribosomal RNA (rRNA) genes. Binds specifically to the boxA antiterminator sequence of the ribosomal RNA (rrn) operons. The polypeptide is Transcription antitermination protein NusB (Desulfotalea psychrophila (strain LSv54 / DSM 12343)).